A 1222-amino-acid polypeptide reads, in one-letter code: ATP-dependent helicase/nuclease subunit A (1222 aa).

Residues 39–495 (QKRTAQQIEA…ILLKENFRSQ (457 aa)) enclose the UvrD-like helicase ATP-binding domain. 60–67 (ASAGSGKT) contacts ATP. The region spanning 524 to 810 (QLIAGSHAQT…NLMTIHKSKG (287 aa)) is the UvrD-like helicase C-terminal domain.

This sequence belongs to the helicase family. AddA subfamily. In terms of assembly, heterodimer of AddA and AddB/RexB. Requires Mg(2+) as cofactor.

The catalysed reaction is Couples ATP hydrolysis with the unwinding of duplex DNA by translocating in the 3'-5' direction.. The enzyme catalyses ATP + H2O = ADP + phosphate + H(+). Its function is as follows. The heterodimer acts as both an ATP-dependent DNA helicase and an ATP-dependent, dual-direction single-stranded exonuclease. Recognizes the chi site generating a DNA molecule suitable for the initiation of homologous recombination. The AddA nuclease domain is required for chi fragment generation; this subunit has the helicase and 3' -&gt; 5' nuclease activities. This chain is ATP-dependent helicase/nuclease subunit A, found in Streptococcus pyogenes serotype M3 (strain ATCC BAA-595 / MGAS315).